The sequence spans 131 residues: Small ribosomal subunit protein uS8 (131 aa).

This sequence belongs to the universal ribosomal protein uS8 family. Part of the 30S ribosomal subunit. Contacts proteins S5 and S12.

One of the primary rRNA binding proteins, it binds directly to 16S rRNA central domain where it helps coordinate assembly of the platform of the 30S subunit. This chain is Small ribosomal subunit protein uS8, found in Nitrosospira multiformis (strain ATCC 25196 / NCIMB 11849 / C 71).